Here is a 273-residue protein sequence, read N- to C-terminus: Pantothenate synthetase (273 aa).

27–34 contacts ATP; that stretch reads MGALHQGH. Residue His-34 is the Proton donor of the active site. Residue Gln-58 participates in (R)-pantoate binding. Position 58 (Gln-58) interacts with beta-alanine. 144–147 contacts ATP; the sequence is GKKD. (R)-pantoate is bound at residue Gln-150. ATP-binding positions include Val-173 and 181–184; that span reads LSSR.

It belongs to the pantothenate synthetase family. In terms of assembly, homodimer.

The protein resides in the cytoplasm. The enzyme catalyses (R)-pantoate + beta-alanine + ATP = (R)-pantothenate + AMP + diphosphate + H(+). It functions in the pathway cofactor biosynthesis; (R)-pantothenate biosynthesis; (R)-pantothenate from (R)-pantoate and beta-alanine: step 1/1. Catalyzes the condensation of pantoate with beta-alanine in an ATP-dependent reaction via a pantoyl-adenylate intermediate. This is Pantothenate synthetase from Nitratiruptor sp. (strain SB155-2).